Consider the following 131-residue polypeptide: Serum amyloid A-3 protein (131 aa).

The N-terminal stretch at 1-18 is a signal peptide; it reads MNLSTGIIFCFLILGVSS. Over residues 94-105 the composition is skewed to basic and acidic residues; the sequence is MTRDQVREDSKA. A disordered region spans residues 94-131; the sequence is MTRDQVREDSKADQFANEWGRSGKDPNHFRPAGLPDKY.

This sequence belongs to the SAA family. Expressed in the liver. Expressed in mammary epithelial cells. Expressed at high levels in mammary ductal cells and vesicle engorged alveoli, but absent from stromal and connective tissue and leukocytes. Secreted into colostrum and mastitic milk (at protein level). Low expression levels, if any, in normal milk (at protein level).

It is found in the secreted. Functionally, major acute phase reactant. Apolipoprotein of the HDL complex. May have a role in protection of the mammary gland during remodeling and infection. In vitro exhibits antimicrobial activity against Escherichia coli, Streptococcus uberis and Pseudomonas aeruginosa. The sequence is that of Serum amyloid A-3 protein (SAA3) from Bos taurus (Bovine).